A 250-amino-acid polypeptide reads, in one-letter code: ATP synthase subunit a (250 aa).

6 consecutive transmembrane segments (helical) span residues 29-49 (ASLF…FATS), 84-104 (FFPL…LGMV), 114-134 (IIVT…YGFI), 143-163 (LFVP…IEII), 185-205 (ITLK…ALGI), and 208-228 (AILP…VAFL).

The protein belongs to the ATPase A chain family. In terms of assembly, F-type ATPases have 2 components, CF(1) - the catalytic core - and CF(0) - the membrane proton channel. CF(1) has five subunits: alpha(3), beta(3), gamma(1), delta(1), epsilon(1). CF(0) has three main subunits: a(1), b(2) and c(9-12). The alpha and beta chains form an alternating ring which encloses part of the gamma chain. CF(1) is attached to CF(0) by a central stalk formed by the gamma and epsilon chains, while a peripheral stalk is formed by the delta and b chains.

Its subcellular location is the cell inner membrane. In terms of biological role, key component of the proton channel; it plays a direct role in the translocation of protons across the membrane. The chain is ATP synthase subunit a from Rhizobium rhizogenes (strain K84 / ATCC BAA-868) (Agrobacterium radiobacter).